Here is a 775-residue protein sequence, read N- to C-terminus: Suppressor of glycerol defect protein 1 (775 aa).

2 stretches are compositionally biased toward basic residues: residues Met1 to Lys11 and Arg28 to Arg49. Disordered stretches follow at residues Met1–Pro101 and Ile152–Lys253. 3 stretches are compositionally biased toward basic and acidic residues: residues Asn52–Arg79, Thr177–Asn193, and Asp209–Pro223. The MIF4G domain maps to Arg262–Lys463. Residues Thr565–Phe689 enclose the MI domain.

The protein belongs to the CWC22 family.

The protein resides in the nucleus. Its subcellular location is the nucleolus. Involved in osmoregulatory glycerol response. In Schizosaccharomyces pombe (strain 972 / ATCC 24843) (Fission yeast), this protein is Suppressor of glycerol defect protein 1 (sgd1).